The primary structure comprises 386 residues: Na(+)/H(+) antiporter NhaA (386 aa).

Transmembrane regions (helical) follow at residues 10–30 (MGSA…IFAN), 58–78 (LLHW…GLEV), 94–114 (IFPA…YYLI), 124–144 (GWAI…ALLG), 154–174 (FLLA…AVFF), 176–196 (EELS…LITL), 199–219 (MKVG…AAVL), 253–273 (ILTP…NAGV), 283–303 (IFST…PLGV), 327–347 (VFAI…LAGL), and 361–381 (LSRL…YLLL).

Belongs to the NhaA Na(+)/H(+) (TC 2.A.33) antiporter family.

It is found in the cell inner membrane. The enzyme catalyses Na(+)(in) + 2 H(+)(out) = Na(+)(out) + 2 H(+)(in). In terms of biological role, na(+)/H(+) antiporter that extrudes sodium in exchange for external protons. In Mannheimia succiniciproducens (strain KCTC 0769BP / MBEL55E), this protein is Na(+)/H(+) antiporter NhaA.